The primary structure comprises 363 residues: Fructose-1,6-bisphosphatase 1 (363 aa).

N-acetylvaline is present on valine 2. AMP contacts are provided by residues 18–22 (VLEEG) and 28–32 (TGEMT). Mg(2+) is bound by residues aspartate 69 and glutamate 98. AMP is bound at residue 113-114 (KY). Positions 119, 121, and 122 each coordinate Mg(2+). Residue 122-125 (DGSS) coordinates substrate. Arginine 141 is an AMP binding site. Residue lysine 151 is modified to N6-succinyllysine. Substrate-binding positions include 213-216 (NEGY), 244-249 (RYVGSM), tyrosine 265, and 275-277 (KLR). Phosphotyrosine is present on residues tyrosine 216, tyrosine 245, and tyrosine 265. Glutamate 281 provides a ligand contact to Mg(2+). Residues serine 339 and serine 353 each carry the phosphoserine modification.

The protein belongs to the FBPase class 1 family. In terms of assembly, homotetramer. It depends on Mg(2+) as a cofactor.

It catalyses the reaction beta-D-fructose 1,6-bisphosphate + H2O = beta-D-fructose 6-phosphate + phosphate. The protein operates within carbohydrate biosynthesis; gluconeogenesis. With respect to regulation, subject to complex allosteric regulation. The enzyme can assume an active R-state, or an inactive T-state. Intermediate conformations may exist. AMP acts as an allosteric inhibitor. AMP binding affects the turnover of bound substrate and not the affinity for substrate. Fructose 2,6-bisphosphate acts as a competitive inhibitor. Fructose 2,6-bisphosphate and AMP have synergistic effects. Functionally, catalyzes the hydrolysis of fructose 1,6-bisphosphate to fructose 6-phosphate in the presence of divalent cations, acting as a rate-limiting enzyme in gluconeogenesis. Plays a role in regulating glucose sensing and insulin secretion of pancreatic beta-cells. Appears to modulate glycerol gluconeogenesis in liver. Important regulator of appetite and adiposity; increased expression of the protein in liver after nutrient excess increases circulating satiety hormones and reduces appetite-stimulating neuropeptides and thus seems to provide a feedback mechanism to limit weight gain. The chain is Fructose-1,6-bisphosphatase 1 (Fbp1) from Rattus norvegicus (Rat).